The following is a 109-amino-acid chain: MSQYYELYRRSSIGISLTDALDDLISQGKISPQLAMKVLFNFDKSMTEALAEKVRSRLTFKGHLDTYRFCDEVWTFIIKNPSFRFDNETVTSNKIRIVACATRDSSANR.

It belongs to the TFIIA subunit 2 family. As to quaternary structure, TFIIA is a heterodimer composed of the large toa1 and the small toa2 subunits.

It localises to the nucleus. Its subcellular location is the cytoplasm. Functionally, TFIIA is a component of the transcription machinery of RNA polymerase II and plays an important role in transcriptional activation. TFIIA in a complex with tbp mediates transcriptional activity. The chain is Transcription initiation factor IIA subunit 2 (toa2) from Schizosaccharomyces pombe (strain 972 / ATCC 24843) (Fission yeast).